Here is a 326-residue protein sequence, read N- to C-terminus: MYGIGNTTILTILISIILLNYILKTITNTMDYIIFRFLLLIALISPFVRTPNYGMYLPITGSLDAVYTNSTSGESFLTSTLCLYYPTEAKNEISDDEWENTLSQLFLTKGWPTGSVYFKDYNDITTFSMNPQLYCDYNVVLMRYDNTSELDASELADLILNEWLCNPMDISLHYYQQSSESNKWISMGTDCTVKVCPLNTQTLGIGCKTTDVNTFEIVASSEKLVITDVVNGVNHKINISMSTCTIRNCNKLGPRENVAIIQVGGPNALDITADPTTVPQVQRIMRINWKKWWQVFYTVVDYINQIIQVMSKRSRSLDTAAFYYRI.

The N-terminal stretch at methionine 1–threonine 50 is a signal peptide. Residue asparagine 69 is glycosylated (N-linked (GlcNAc...) asparagine; by host). An intrachain disulfide couples cysteine 82 to cysteine 135. Aspartate 95 contacts Ca(2+). Residue asparagine 146 is glycosylated (N-linked (GlcNAc...) asparagine; by host). A CNP motif; interaction with ITGAV/ITGB3 region spans residues cysteine 165 to proline 167. 3 disulfide bridges follow: cysteine 165–cysteine 249, cysteine 191–cysteine 244, and cysteine 196–cysteine 207. Glutamine 177, glycine 206, threonine 214, glutamate 216, aspartate 228, and valine 229 together coordinate Ca(2+). Asparagine 238 carries an N-linked (GlcNAc...) asparagine; by host glycan. Residues glycine 253–arginine 255 are GPR motif; interaction with ITGAX/ITGB2. Aspartate 301 lines the Ca(2+) pocket.

Belongs to the rotavirus VP7 family. In terms of assembly, homotrimer; disulfide-linked. 2 Ca(2+) ions bound at each subunit interface in the trimer hold the trimer together. Interacts with the intermediate capsid protein VP6. Interacts with the outer capsid protein VP5*. N-glycosylated. In terms of processing, the N-terminus is blocked possibly by pyroglutamic acid.

The protein localises to the virion. It localises to the host endoplasmic reticulum lumen. Its function is as follows. Calcium-binding protein that interacts with rotavirus cell receptors once the initial attachment by VP4 has been achieved. Rotavirus attachment and entry into the host cell probably involves multiple sequential contacts between the outer capsid proteins VP4 and VP7, and the cell receptors. Following entry into the host cell, low intracellular or intravesicular Ca(2+) concentration probably causes the calcium-stabilized VP7 trimers to dissociate from the virion. This step is probably necessary for the membrane-disrupting entry step and the release of VP4, which is locked onto the virion by VP7. The protein is Outer capsid glycoprotein VP7 of Rotavirus A (strain RVA/Human/Japan/KUN/1980/G2P1B[4]) (RV-A).